Reading from the N-terminus, the 934-residue chain is 3-hydroxy-3-methylglutaryl-coenzyme A reductase (934 aa).

Residues 1–111 (MFYHGASANQ…VLNLVRGAET (111 aa)) lie on the Lumenal side of the membrane. The chain crosses the membrane as a helical span at residues 112–132 (FDIALVTCAYIAMFYTLFNLF). In terms of domain architecture, SSD spans 113–280 (DIALVTCAYI…STFLSAILSL (168 aa)). The Cytoplasmic portion of the chain corresponds to 133–141 (ARMRAVGSK). Residues 142 to 162 (VWLGLSTLVSSFFAFLFALYI) form a helical membrane-spanning segment. Residues 163 to 168 (TTRVLD) are Lumenal-facing. Residues 169–189 (LSIPFLSLSEGIPFFVAVVGF) form a helical membrane-spanning segment. Topologically, residues 190-231 (NNKILLAEKVLQNQLNAQSSKNDAPTVLYQALREQGPLLLRD) are cytoplasmic. A helical membrane pass occupies residues 232 to 252 (HLFMITAFLGCSFYASYLDGL). The Lumenal segment spans residues 253-256 (KNFC). The helical transmembrane segment at 257–277 (ILAALILAFDILTTSTFLSAI) threads the bilayer. Topologically, residues 278–334 (LSLKLEINQIHRSTLLREQLEDDGLTETTVDDVLKSNSLAGTKTFTDAPSTLVTVAK) are cytoplasmic. A helical membrane pass occupies residues 335-355 (VAGVSVFFGLHFYGFGSAWLS). Over 356-421 (DLSAGNETND…GLISTAARDK (66 aa)) the chain is Lumenal. N-linked (GlcNAc...) asparagine glycans are attached at residues asparagine 361, asparagine 364, and asparagine 382. A helical transmembrane segment spans residues 422 to 442 (YISKFILFAFAVSASINVYLL). Residues 443–934 (NVARIHTTRL…MQHNRAAAKK (492 aa)) lie on the Cytoplasmic side of the membrane. Glutamate 618 serves as the catalytic Charge relay system. 624 to 630 (SAMRGCK) is a CoA binding site. Residues 685-687 (SRF) and 712-720 (DAMGMNMIS) each bind NADP(+). The Charge relay system role is filled by lysine 752. 781–783 (VLK) is a CoA binding site. Catalysis depends on aspartate 828, which acts as the Charge relay system. 923–924 (SH) serves as a coordination point for CoA. Histidine 924 (proton donor) is an active-site residue. 928–929 (NR) is a binding site for NADP(+).

The protein belongs to the HMG-CoA reductase family.

Its subcellular location is the endoplasmic reticulum membrane. It catalyses the reaction (R)-mevalonate + 2 NADP(+) + CoA = (3S)-3-hydroxy-3-methylglutaryl-CoA + 2 NADPH + 2 H(+). Its pathway is metabolic intermediate biosynthesis; (R)-mevalonate biosynthesis; (R)-mevalonate from acetyl-CoA: step 3/3. In terms of biological role, HMG-CoA reductase; part of the first module of ergosterol biosynthesis pathway that includes the early steps of the pathway, conserved across all eukaryotes, and which results in the formation of mevalonate from acetyl-coenzyme A (acetyl-CoA). In this module, the cytosolic acetyl-CoA acetyltransferase catalyzes the formation of acetoacetyl-CoA. The hydroxymethylglutaryl-CoA synthase then condenses acetyl-CoA with acetoacetyl-CoA to form HMG-CoA. The rate-limiting step of the early module is the reduction to mevalonate by the 3-hydroxy-3-methylglutaryl-coenzyme A (HMG-CoA) reductase. The protein is 3-hydroxy-3-methylglutaryl-coenzyme A reductase of Cyberlindnera jadinii (Torula yeast).